The primary structure comprises 86 residues: uncharacterized protein (86 aa).

It is found in the mitochondrion. This is an uncharacterized protein from Marchantia polymorpha (Common liverwort).